A 1078-amino-acid chain; its full sequence is Carbamoyl phosphate synthase large chain (1078 aa).

The segment at 1–401 (MARQPLVSSV…ALQKAVRGLE (401 aa)) is carboxyphosphate synthetic domain. The ATP site is built by Arg-129, Arg-169, Gly-175, Gly-176, Arg-208, Leu-210, Glu-215, Gly-241, Val-242, His-243, Gln-284, and Glu-298. Positions 133 to 327 (KELLLEIGEP…IARIAAKLAI (195 aa)) constitute an ATP-grasp 1 domain. Gln-284, Glu-298, and Asn-300 together coordinate Mg(2+). Mn(2+) is bound by residues Gln-284, Glu-298, and Asn-300. The tract at residues 402–546 (TDQTDLTWED…YATYEDENEA (145 aa)) is oligomerization domain. The interval 547–935 (PPLDSPKAVV…ALAKAFLAAG (389 aa)) is carbamoyl phosphate synthetic domain. One can recognise an ATP-grasp 2 domain in the interval 677–867 (ERFLHELGIP…MVDVATQILL (191 aa)). ATP-binding residues include Arg-713, Lys-752, Leu-754, Glu-758, Gly-783, Val-784, His-785, Ser-786, Gln-826, and Glu-838. Residues Gln-826, Glu-838, and Asn-840 each coordinate Mg(2+). Residues Gln-826, Glu-838, and Asn-840 each contribute to the Mn(2+) site. In terms of domain architecture, MGS-like spans 936-1078 (LAIERGAPVL…AYRTREAVLA (143 aa)). The segment at 936–1078 (LAIERGAPVL…AYRTREAVLA (143 aa)) is allosteric domain.

It belongs to the CarB family. Composed of two chains; the small (or glutamine) chain promotes the hydrolysis of glutamine to ammonia, which is used by the large (or ammonia) chain to synthesize carbamoyl phosphate. Tetramer of heterodimers (alpha,beta)4. The cofactor is Mg(2+). Mn(2+) serves as cofactor.

The enzyme catalyses hydrogencarbonate + L-glutamine + 2 ATP + H2O = carbamoyl phosphate + L-glutamate + 2 ADP + phosphate + 2 H(+). It catalyses the reaction hydrogencarbonate + NH4(+) + 2 ATP = carbamoyl phosphate + 2 ADP + phosphate + 2 H(+). It functions in the pathway amino-acid biosynthesis; L-arginine biosynthesis; carbamoyl phosphate from bicarbonate: step 1/1. The protein operates within pyrimidine metabolism; UMP biosynthesis via de novo pathway; (S)-dihydroorotate from bicarbonate: step 1/3. In terms of biological role, large subunit of the glutamine-dependent carbamoyl phosphate synthetase (CPSase). CPSase catalyzes the formation of carbamoyl phosphate from the ammonia moiety of glutamine, carbonate, and phosphate donated by ATP, constituting the first step of 2 biosynthetic pathways, one leading to arginine and/or urea and the other to pyrimidine nucleotides. The large subunit (synthetase) binds the substrates ammonia (free or transferred from glutamine from the small subunit), hydrogencarbonate and ATP and carries out an ATP-coupled ligase reaction, activating hydrogencarbonate by forming carboxy phosphate which reacts with ammonia to form carbamoyl phosphate. The sequence is that of Carbamoyl phosphate synthase large chain from Thermomicrobium roseum (strain ATCC 27502 / DSM 5159 / P-2).